A 409-amino-acid chain; its full sequence is Lysosome-associated membrane glycoprotein 1 (409 aa).

An N-terminal signal peptide occupies residues 1-25 (MAAPGGARRRPLLLLLFAGLVHGAS). Residues 26–187 (AVFVVKNGNG…SNFSREETRC (162 aa)) form a first lumenal domain region. At 26–374 (AVFVVKNGNG…EECQLDENSM (349 aa)) the chain is on the lumenal side. 10 N-linked (GlcNAc...) asparagine glycosylation sites follow: Asn34, Asn59, Asn72, Asn80, Asn103, Asn117, Asn126, Asn146, Asn161, and Asn179. The cysteines at positions 38 and 76 are disulfide-linked. The cysteines at positions 151 and 187 are disulfide-linked. Residues 180-207 (FSREETRCEQDLPTPTTPPQPAPTPAPA) are disordered. Residues 188–219 (EQDLPTPTTPPQPAPTPAPASPAVFRYNVSGS) form a hinge region. Residues 194–207 (PTTPPQPAPTPAPA) show a composition bias toward pro residues. N-linked (GlcNAc...) asparagine glycosylation is found at Asn215, Asn220, Asn241, Asn253, Asn260, Asn285, Asn299, and Asn314. The interval 220 to 374 (NGTCLLASMG…EECQLDENSM (155 aa)) is second lumenal domain. Cysteines 223 and 261 form a disulfide. Cysteines 330 and 367 form a disulfide. The chain crosses the membrane as a helical span at residues 375-398 (LIPIAVGGALAGLVLIVLLAYLIG). The Cytoplasmic portion of the chain corresponds to 399–409 (RKRSHAGYQTI).

It belongs to the LAMP family. As to quaternary structure, interacts with ABCB9; this interaction strongly stabilizes ABCB9 and protects ABCB9 against lysosomal degradation. Interacts with FURIN. Interacts with TMEM175; inhibiting the proton channel activity of TMEM175. O- and N-glycosylated; some of the N-glycans attached to LAMP-1 are polylactosaminoglycans.

The protein localises to the lysosome membrane. It localises to the endosome membrane. Its subcellular location is the late endosome membrane. The protein resides in the cell membrane. It is found in the cytolytic granule membrane. Lysosomal membrane glycoprotein which plays an important role in lysosome biogenesis, lysosomal pH regulation, autophagy and cholesterol homeostasis. Acts as an important regulator of lysosomal lumen pH regulation by acting as a direct inhibitor of the proton channel TMEM175, facilitating lysosomal acidification for optimal hydrolase activity. Also plays an important role in NK-cells cytotoxicity. Mechanistically, participates in cytotoxic granule movement to the cell surface and perforin trafficking to the lytic granule. In addition, protects NK-cells from degranulation-associated damage induced by their own cytotoxic granule content. Presents carbohydrate ligands to selectins. In Bos taurus (Bovine), this protein is Lysosome-associated membrane glycoprotein 1 (LAMP1).